Reading from the N-terminus, the 488-residue chain is 3-octaprenyl-4-hydroxybenzoate carboxy-lyase (488 aa).

Residue asparagine 172 coordinates Mn(2+). Prenylated FMN is bound by residues 175-177, 189-191, and 194-195; these read IYR, RWL, and RG. Residue glutamate 238 participates in Mn(2+) binding. The active-site Proton donor is the aspartate 287.

Belongs to the UbiD family. In terms of assembly, homohexamer. The cofactor is prenylated FMN. Mn(2+) serves as cofactor.

It localises to the cell membrane. It catalyses the reaction a 4-hydroxy-3-(all-trans-polyprenyl)benzoate + H(+) = a 2-(all-trans-polyprenyl)phenol + CO2. It functions in the pathway cofactor biosynthesis; ubiquinone biosynthesis. Functionally, catalyzes the decarboxylation of 3-octaprenyl-4-hydroxy benzoate to 2-octaprenylphenol, an intermediate step in ubiquinone biosynthesis. The polypeptide is 3-octaprenyl-4-hydroxybenzoate carboxy-lyase (Pseudomonas fluorescens (strain SBW25)).